The sequence spans 118 residues: UPF0295 protein BA_0538/GBAA_0538/BAS0506 (118 aa).

Helical transmembrane passes span 12–32 and 43–63; these read IRTFALSLVFIGLFIAYLGVF and FMMVGFLAVIASTVVYFWIGM.

Belongs to the UPF0295 family.

The protein localises to the cell membrane. The chain is UPF0295 protein BA_0538/GBAA_0538/BAS0506 from Bacillus anthracis.